Consider the following 512-residue polypeptide: Eukaryotic translation initiation factor 3 subunit L (512 aa).

Residues 291-477 (DAFRLFESIL…GERQFTDSVD (187 aa)) form the PCI domain.

Belongs to the eIF-3 subunit L family. As to quaternary structure, component of the eukaryotic translation initiation factor 3 (eIF-3) complex.

The protein resides in the cytoplasm. Component of the eukaryotic translation initiation factor 3 (eIF-3) complex, which is involved in protein synthesis of a specialized repertoire of mRNAs and, together with other initiation factors, stimulates binding of mRNA and methionyl-tRNAi to the 40S ribosome. The eIF-3 complex specifically targets and initiates translation of a subset of mRNAs involved in cell proliferation. This Monosiga brevicollis (Choanoflagellate) protein is Eukaryotic translation initiation factor 3 subunit L.